A 252-amino-acid polypeptide reads, in one-letter code: Hydroxyacylglutathione hydrolase (252 aa).

Histidine 54, histidine 56, aspartate 58, histidine 59, histidine 113, aspartate 132, and histidine 170 together coordinate Zn(2+).

Belongs to the metallo-beta-lactamase superfamily. Glyoxalase II family. In terms of assembly, monomer. Requires Zn(2+) as cofactor.

The catalysed reaction is an S-(2-hydroxyacyl)glutathione + H2O = a 2-hydroxy carboxylate + glutathione + H(+). It functions in the pathway secondary metabolite metabolism; methylglyoxal degradation; (R)-lactate from methylglyoxal: step 2/2. Its function is as follows. Thiolesterase that catalyzes the hydrolysis of S-D-lactoyl-glutathione to form glutathione and D-lactic acid. The chain is Hydroxyacylglutathione hydrolase from Synechococcus sp. (strain JA-2-3B'a(2-13)) (Cyanobacteria bacterium Yellowstone B-Prime).